Here is a 353-residue protein sequence, read N- to C-terminus: MTAILERRESESLWGRFCNWITSTENRLYIGWFGVLMIPTLLTATSVFIIAFIAAPPVDIDGIREPVSGSLLYGNNIISGAIIPTSAAIGLHFYPIWEAASVDEWLYNGGPYELIVLHFLLGVACYMGREWELSFRLGMRPWIAVAYSAPVAAATAVFLIYPIGQGSFSDGMPLGISGTFNFMIVFQAEHNILMHPFHMLGVAGVFGSSLFSAMHGSLVTSSLIRETTENESANEGYRFGQEEETYNIVAAHGYFGRLIFQYASFNNSRSLHFFLAAWPVVGIWFTALGISTMAFNLNGFNFNQSVVDSQGRVINTWADIINRANLGMEVMHERNAHNFPLDLAAMEAPSVNG.

Thr2 is modified (N-acetylthreonine). Thr2 carries the post-translational modification Phosphothreonine. The next 3 helical transmembrane spans lie at 29–46, 118–133, and 142–156; these read YIGW…TATS, HFLL…EWEL, and WIAV…AATA. His118 is a chlorophyll a binding site. Tyr126 contributes to the pheophytin a binding site. [CaMn4O5] cluster-binding residues include Asp170 and Glu189. The chain crosses the membrane as a helical span at residues 197 to 218; sequence FHMLGVAGVFGSSLFSAMHGSL. His198 contacts chlorophyll a. A quinone is bound by residues His215 and 264–265; that span reads SF. His215 contacts Fe cation. Residue His272 participates in Fe cation binding. The helical transmembrane segment at 274–288 threads the bilayer; the sequence is FLAAWPVVGIWFTAL. Residues His332, Glu333, Asp342, and Ala344 each contribute to the [CaMn4O5] cluster site. A propeptide spanning residues 345–353 is cleaved from the precursor; the sequence is AMEAPSVNG.

The protein belongs to the reaction center PufL/M/PsbA/D family. PSII is composed of 1 copy each of membrane proteins PsbA, PsbB, PsbC, PsbD, PsbE, PsbF, PsbH, PsbI, PsbJ, PsbK, PsbL, PsbM, PsbT, PsbX, PsbY, PsbZ, Psb30/Ycf12, at least 3 peripheral proteins of the oxygen-evolving complex and a large number of cofactors. It forms dimeric complexes. The D1/D2 heterodimer binds P680, chlorophylls that are the primary electron donor of PSII, and subsequent electron acceptors. It shares a non-heme iron and each subunit binds pheophytin, quinone, additional chlorophylls, carotenoids and lipids. D1 provides most of the ligands for the Mn4-Ca-O5 cluster of the oxygen-evolving complex (OEC). There is also a Cl(-1) ion associated with D1 and D2, which is required for oxygen evolution. The PSII complex binds additional chlorophylls, carotenoids and specific lipids. is required as a cofactor. In terms of processing, tyr-161 forms a radical intermediate that is referred to as redox-active TyrZ, YZ or Y-Z. C-terminally processed by CTPA; processing is essential to allow assembly of the oxygen-evolving complex and thus photosynthetic growth.

The protein localises to the plastid. It is found in the chloroplast thylakoid membrane. The catalysed reaction is 2 a plastoquinone + 4 hnu + 2 H2O = 2 a plastoquinol + O2. Functionally, photosystem II (PSII) is a light-driven water:plastoquinone oxidoreductase that uses light energy to abstract electrons from H(2)O, generating O(2) and a proton gradient subsequently used for ATP formation. It consists of a core antenna complex that captures photons, and an electron transfer chain that converts photonic excitation into a charge separation. The D1/D2 (PsbA/PsbD) reaction center heterodimer binds P680, the primary electron donor of PSII as well as several subsequent electron acceptors. This is Photosystem II protein D1 from Vigna unguiculata (Cowpea).